Reading from the N-terminus, the 378-residue chain is Coiled-coil domain-containing protein 74A (378 aa).

Disordered regions lie at residues 1-52, 128-211, and 301-328; these read MSGA…RNLD, GGPS…EEPL, and EGSQ…PKVS. Positions 34 to 44 are enriched in polar residues; that stretch reads LRPQSPQLRQS. Positions 47-90 form a coiled coil; it reads QKRNLDLEKSLQFLQQQHSEMLAKLHEEIEHLKRENKDLHYKLI. The span at 141 to 151 shows a compositional bias: basic residues; that stretch reads RTHRPGGKRGR. Over residues 165 to 182 the composition is skewed to polar residues; it reads DSLSMSSFQSVKSISNSG. Composition is skewed to basic and acidic residues over residues 194–205 and 314–323; these read QDSKADVSQKAD and SFPRDQEATH.

The protein is Coiled-coil domain-containing protein 74A (CCDC74A) of Homo sapiens (Human).